A 282-amino-acid polypeptide reads, in one-letter code: Bifunctional protein FolD (282 aa).

NADP(+)-binding positions include 164–166 (GAS), Ile189, and Ile230.

This sequence belongs to the tetrahydrofolate dehydrogenase/cyclohydrolase family. As to quaternary structure, homodimer.

It catalyses the reaction (6R)-5,10-methylene-5,6,7,8-tetrahydrofolate + NADP(+) = (6R)-5,10-methenyltetrahydrofolate + NADPH. The enzyme catalyses (6R)-5,10-methenyltetrahydrofolate + H2O = (6R)-10-formyltetrahydrofolate + H(+). It functions in the pathway one-carbon metabolism; tetrahydrofolate interconversion. Its function is as follows. Catalyzes the oxidation of 5,10-methylenetetrahydrofolate to 5,10-methenyltetrahydrofolate and then the hydrolysis of 5,10-methenyltetrahydrofolate to 10-formyltetrahydrofolate. The protein is Bifunctional protein FolD of Nitratiruptor sp. (strain SB155-2).